The following is a 136-amino-acid chain: ATP synthase epsilon chain (136 aa).

Residues 104 to 136 (AGMEGQPASPEKVKAQQQLNEARARMQASKSAD) form a disordered region.

This sequence belongs to the ATPase epsilon chain family. In terms of assembly, F-type ATPases have 2 components, CF(1) - the catalytic core - and CF(0) - the membrane proton channel. CF(1) has five subunits: alpha(3), beta(3), gamma(1), delta(1), epsilon(1). CF(0) has three main subunits: a, b and c.

The protein localises to the cellular thylakoid membrane. Produces ATP from ADP in the presence of a proton gradient across the membrane. The protein is ATP synthase epsilon chain of Synechococcus sp. (strain CC9902).